The sequence spans 149 residues: Calmodulin (149 aa).

An N-acetylalanine modification is found at A2. EF-hand domains follow at residues 8-43, 44-79, 81-116, and 117-149; these read EQIA…LGQN, PTEA…KMKD, DSEE…LGEK, and LTDE…MTAK. Positions 21, 23, 25, 27, 32, 57, 59, 61, 63, 68, 94, 96, 98, 100, and 105 each coordinate Ca(2+). At K116 the chain carries N6,N6,N6-trimethyllysine. Positions 130, 132, 134, 136, and 141 each coordinate Ca(2+).

It belongs to the calmodulin family.

In terms of biological role, calmodulin acts as part of a calcium signal transduction pathway by mediating the control of a large number of enzymes, ion channels, aquaporins and other proteins through calcium-binding. Calcium-binding is required for the activation of calmodulin. Among the enzymes to be stimulated by the calmodulin-calcium complex are a number of protein kinases, such as myosin light-chain kinases and calmodulin-dependent protein kinase type II (CaMK2), and phosphatases. The chain is Calmodulin (calm) from Electrophorus electricus (Electric eel).